Here is an 88-residue protein sequence, read N- to C-terminus: Small ribosomal subunit protein uS15 (88 aa).

The span at 1–20 shows a compositional bias: polar residues; sequence MLTTQDKQNIIKENQQSEGD. Residues 1 to 24 form a disordered region; the sequence is MLTTQDKQNIIKENQQSEGDTGSP.

Belongs to the universal ribosomal protein uS15 family. As to quaternary structure, part of the 30S ribosomal subunit. Forms a bridge to the 50S subunit in the 70S ribosome, contacting the 23S rRNA.

Its function is as follows. One of the primary rRNA binding proteins, it binds directly to 16S rRNA where it helps nucleate assembly of the platform of the 30S subunit by binding and bridging several RNA helices of the 16S rRNA. Forms an intersubunit bridge (bridge B4) with the 23S rRNA of the 50S subunit in the ribosome. The protein is Small ribosomal subunit protein uS15 of Francisella philomiragia subsp. philomiragia (strain ATCC 25017 / CCUG 19701 / FSC 153 / O#319-036).